Reading from the N-terminus, the 727-residue chain is Epithelial splicing regulatory protein 2 (727 aa).

The segment at 1 to 22 is disordered; sequence MTPPPPPPPPPGPDPAADPAAD. At S83 the chain carries Phosphoserine. RRM domains lie at 257-353, 358-438, and 475-555; these read TVVR…RFLS, VILR…RSTA, and DCVR…PCST. S573 carries the post-translational modification Phosphoserine.

This sequence belongs to the ESRP family. As to quaternary structure, interacts with RBPMS. As to expression, epithelial cell-specific.

The protein localises to the nucleus. Its function is as follows. mRNA splicing factor that regulates the formation of epithelial cell-specific isoforms. Specifically regulates the expression of FGFR2-IIIb, an epithelial cell-specific isoform of FGFR2. Also regulates the splicing of CD44, CTNND1, ENAH, 3 transcripts that undergo changes in splicing during the epithelial-to-mesenchymal transition (EMT). Acts by directly binding specific sequences in mRNAs. Binds the GU-rich sequence motifs in the ISE/ISS-3, a cis-element regulatory region present in the mRNA of FGFR2. The chain is Epithelial splicing regulatory protein 2 (ESRP2) from Homo sapiens (Human).